Here is a 477-residue protein sequence, read N- to C-terminus: E3 ubiquitin-protein ligase TRIM17 (477 aa).

The RING-type zinc finger occupies 16–66; it reads CSICLDYFTDPVMTACGHNFCRECIQMSWEKGKVKKGKKKQKGSFPCPECR. The B box-type zinc finger occupies 94-135; the sequence is QKRDLCQAHQEPLKLFCQDDQSPICVVCREAQEHRMHRVLPL. Zn(2+) is bound by residues C99, H102, C121, and H127. Positions 135-226 form a coiled coil; that stretch reads LDEAAREYKL…KLQDSKASLD (92 aa). A B30.2/SPRY domain is found at 276-475; sequence AIKTLCRVPG…MVISTVTMWV (200 aa).

This sequence belongs to the TRIM/RBCC family. In terms of assembly, interacts (via coiled coil) with TRIM44 (via coiled coil). Interacts with TRIM28; this interaction prevents TRIM28 activity on BCL2A1. Interacts with TRIM41; this interaction prevents TRIM41 activity on ZSCAN2. Interacts with BECN1. Interacts with NFATC3 and NFATC4; these interactions prevent NFATC3 and NFATC4 nuclear localization. In terms of processing, auto-ubiquitinated. As to expression, almost exclusively in the testis.

It is found in the cytoplasm. It localises to the lysosome. The catalysed reaction is S-ubiquitinyl-[E2 ubiquitin-conjugating enzyme]-L-cysteine + [acceptor protein]-L-lysine = [E2 ubiquitin-conjugating enzyme]-L-cysteine + N(6)-ubiquitinyl-[acceptor protein]-L-lysine.. Its pathway is protein modification; protein ubiquitination. Functionally, E3 ubiquitin ligase that plays important roles in the regulation of neuronal apoptosis, selective autophagy or cell proliferation. Stimulates the degradation of kinetochore ZW10 interacting protein ZWINT in a proteasome-dependent manner, leading to negative regulation of cell proliferation. Inhibits autophagic degradation of diverse known targets while contributing to autophagy of midbodies. Autophagy-inhibitory activity involves MCL1, which TRIM17 assembles into complexes with the key autophagy regulator BECN1. Controls neuronal apoptosis by mediating ubiquitination and degradation of MCL1 to initiate neuronal death. In addition, regulates NFAT transcription factors NFATC3 and NFATC4 activities by preventing their nuclear localization, thus inhibiting their transcriptional activities. Decreases TRIM41-mediated degradation of ZSCAN2 thereby stimulating alpha-synuclein/SNCA transcription in neuronal cells. Prevents the E3 ubiquitin-ligase activity of TRIM28 and its interaction with anti-apoptotic BCL2A1, blocking TRIM28 from ubiquitinating BCL2A1. This is E3 ubiquitin-protein ligase TRIM17 (Trim17) from Mus musculus (Mouse).